The chain runs to 327 residues: tRNA dimethylallyltransferase (327 aa).

14 to 21 (GPTASGKT) contacts ATP. 16-21 (TASGKT) contributes to the substrate binding site. 2 interaction with substrate tRNA regions span residues 39 to 42 (DSAL) and 163 to 167 (QRIQR).

The protein belongs to the IPP transferase family. As to quaternary structure, monomer. The cofactor is Mg(2+).

The catalysed reaction is adenosine(37) in tRNA + dimethylallyl diphosphate = N(6)-dimethylallyladenosine(37) in tRNA + diphosphate. Functionally, catalyzes the transfer of a dimethylallyl group onto the adenine at position 37 in tRNAs that read codons beginning with uridine, leading to the formation of N6-(dimethylallyl)adenosine (i(6)A). This chain is tRNA dimethylallyltransferase, found in Xanthomonas euvesicatoria pv. vesicatoria (strain 85-10) (Xanthomonas campestris pv. vesicatoria).